A 174-amino-acid polypeptide reads, in one-letter code: Methylated protein MJ0556 (174 aa).

2 consecutive CBS domains span residues 28–87 and 91–156; these read MISG…YLNV and MLKN…IIKE.

Post-translationally, methylated at an undetermined residue between Ser-2 and Asp-26.

This is Methylated protein MJ0556 from Methanocaldococcus jannaschii (strain ATCC 43067 / DSM 2661 / JAL-1 / JCM 10045 / NBRC 100440) (Methanococcus jannaschii).